The following is a 320-amino-acid chain: Putative FBD-associated F-box protein At3g60710 (320 aa).

In terms of domain architecture, F-box spans 2 to 48 (EDLISQLPNELLQEILLNLPTSESVRTSVLPTRWRNLWQSVPGLYLI). The 57-residue stretch at 212–268 (MEEIASSPVPKCLQTSIENVKIKMTPKADQEKSRKAETEVANYILENATLLKLTLWL) folds into the FBD domain.

The protein is Putative FBD-associated F-box protein At3g60710 of Arabidopsis thaliana (Mouse-ear cress).